The sequence spans 308 residues: UDP-N-acetylenolpyruvoylglucosamine reductase (308 aa).

In terms of domain architecture, FAD-binding PCMH-type spans 24-187 (RVGGPADWLF…VSASLQGVPG (164 aa)). Residue Arg-167 is part of the active site. A disordered region spans residues 199-230 (QLDKRDQTQPTKERSAGSTFRNPAGFSSTGRA). A compositionally biased stretch (basic and acidic residues) spans 200–213 (LDKRDQTQPTKERS). Residues 214–228 (AGSTFRNPAGFSSTG) are compositionally biased toward polar residues. Ser-216 (proton donor) is an active-site residue. The active site involves Glu-298.

It belongs to the MurB family. It depends on FAD as a cofactor.

Its subcellular location is the cytoplasm. The enzyme catalyses UDP-N-acetyl-alpha-D-muramate + NADP(+) = UDP-N-acetyl-3-O-(1-carboxyvinyl)-alpha-D-glucosamine + NADPH + H(+). Its pathway is cell wall biogenesis; peptidoglycan biosynthesis. In terms of biological role, cell wall formation. The polypeptide is UDP-N-acetylenolpyruvoylglucosamine reductase (Ruegeria pomeroyi (strain ATCC 700808 / DSM 15171 / DSS-3) (Silicibacter pomeroyi)).